The chain runs to 863 residues: MDADHLLGASIIRIPPHHYIHVLDQNTNIARVEIGPLTYIRQDNERVLFAPVRMMMVPPRHYCVVLNPAVRDDEGQVQFDGSGQVKLRHADLEIRLAQDPFPLYPGEEIQKDVTPLQIVYPDTALRLQALLDFEEEGGEKRVAGDEWLFEGPGTYIPRKEVTVLEVIKATVIRENQAIRLRARKEGLDRSGVQRVTGEEWQVSKVGAYLPGAHEEVVDIVSAFILTDKKALHVRAIRPFRDAGGRDRRTGEEWLVTVADREAHIPSVAEEVVGVVDVTTLNSRQYCVIMDPVGADGKPQLGQKRVVKGERSFFLMPGEHLENGIQDVYVLSEEEGLVLRAVEAFIDTQGDEAEEEERESRAKKRGVQRRPGDRWMLRGPIEYVPPATVEVLLTRTAIPLDENEGIYVRDIKTGKVRAVIGQTYMLTQDEELWEKELPANVESLLAQSRDPLADRSDRGRSFGQAERDKTRVVSYRIPHNATVQVYDYREKKARVMFGPEMVMLGPDEQFTVLSLSGDKPKRPNVIKTICLLLGPDFCTDIITIETADHARLQLQLSYNWHFDLKQPADAAQAAALFSVPDFVGDACKAIASRIRGAVASVQFDDFHKNSNRIICSAVFGFDEKLAVRSSLRFGQNGLVISSVDIQSVEPVDQRTRDALQKSVQLAIEITTNSQEAAARHEAERLEQEARGRLERQKITDQAEAEKARKELLELEAQSAAVESTGAAKAEAQSRAEAARIQGEAAVEEAKLKAEAQKIEADSELARLCKAREQELNYKKQIDHLEVEKQQKLADIESQRFKHLMDNLGTETLKEMARAGPELQVKLLQSLGLKSTLITDGSSPINLFTTANGLLGSLQGKDKDE.

9 MVP repeats span residues 2–60 (DADH…VPPR), 61–115 (HYCV…DVTP), 116–168 (LQIV…EVIK), 169–221 (ATVI…DIVS), 222–276 (AFIL…GVVD), 277–327 (VTTL…IQDV), 328–396 (YVLS…TRTA), 397–471 (IPLD…KTRV), and 472–534 (VSYR…LLGP). The disordered stretch occupies residues 349 to 368 (GDEAEEEERESRAKKRGVQR). Residues 677–706 (ARHEAERLEQEARGRLERQKITDQAEAEKA) form the IQ domain.

As to quaternary structure, the vault ribonucleoprotein particle is a huge (400 A x 670 A) cage structure of 12.9 MDa. It consists of a dimer of half-vaults, with each half-vault comprising 39 identical major vault protein (MVP) chains, PARP4 and one or more vault RNAs (vRNAs).

The protein resides in the cytoplasm. The protein localises to the nucleus. In terms of biological role, required for normal vault structure. Vaults are multi-subunit structures that may act as scaffolds for proteins involved in signal transduction. Vaults may also play a role in nucleo-cytoplasmic transport. In Danio rerio (Zebrafish), this protein is Major vault protein (mvp).